Consider the following 416-residue polypeptide: Glutamyl-tRNA reductase (416 aa).

Residues 49 to 52, S105, 110 to 112, and Q116 each bind substrate; these read TCNR and EPQ. C50 serves as the catalytic Nucleophile. Residue 185-190 participates in NADP(+) binding; sequence GAGETI.

Belongs to the glutamyl-tRNA reductase family. In terms of assembly, homodimer.

The enzyme catalyses (S)-4-amino-5-oxopentanoate + tRNA(Glu) + NADP(+) = L-glutamyl-tRNA(Glu) + NADPH + H(+). The protein operates within porphyrin-containing compound metabolism; protoporphyrin-IX biosynthesis; 5-aminolevulinate from L-glutamyl-tRNA(Glu): step 1/2. Functionally, catalyzes the NADPH-dependent reduction of glutamyl-tRNA(Glu) to glutamate 1-semialdehyde (GSA). This chain is Glutamyl-tRNA reductase, found in Shewanella putrefaciens (strain CN-32 / ATCC BAA-453).